Reading from the N-terminus, the 375-residue chain is Heat shock protein 42 (375 aa).

Disordered stretches follow at residues 21–59 (TGQR…HPLY), 81–127 (SPEY…YYHC), 154–238 (PYEG…ETRM), and 347–375 (PKPK…TVEN). The span at 22-48 (GQRGQQGYPRQPQRPQRYHPHYGQVHV) shows a compositional bias: low complexity. Basic residues predominate over residues 49-58 (GGHHPRHHPL). Acidic residues-rich tracts occupy residues 85 to 101 (GYDD…EDMV) and 158 to 168 (TEPEIEANTEQ). Residues 169–197 (EGEKGEEKDKKDKSEAPKEEAGETNKEKP) show a composition bias toward basic and acidic residues. Phosphoserine occurs at positions 182, 213, 214, 215, and 223. The 120-residue stretch at 237-356 (RMDLPFSPEV…PKPKKRIAIE (120 aa)) folds into the sHSP domain. A compositionally biased stretch (acidic residues) spans 357-367 (EIPDEELEFEE).

Belongs to the small heat shock protein (HSP20) family. In terms of assembly, forms oligomeric complexes. Interacts with itself.

The protein is Heat shock protein 42 (HSP42) of Saccharomyces cerevisiae (strain ATCC 204508 / S288c) (Baker's yeast).